A 472-amino-acid chain; its full sequence is 6-phosphogluconate dehydrogenase, decarboxylating (472 aa).

Residues 10 to 15, 33 to 35, 74 to 76, and Asn102 each bind NADP(+); these read GMAVMG, NRT, and VQA. Substrate contacts are provided by residues Asn102 and 128–130; that span reads SGG. Lys184 acts as the Proton acceptor in catalysis. A substrate-binding site is contributed by 187 to 188; it reads HN. Glu191 serves as the catalytic Proton donor. The substrate site is built by Tyr192, Lys262, Arg289, Arg447, and His453.

The protein belongs to the 6-phosphogluconate dehydrogenase family. Homodimer.

It catalyses the reaction 6-phospho-D-gluconate + NADP(+) = D-ribulose 5-phosphate + CO2 + NADPH. It functions in the pathway carbohydrate degradation; pentose phosphate pathway; D-ribulose 5-phosphate from D-glucose 6-phosphate (oxidative stage): step 3/3. Its function is as follows. Catalyzes the oxidative decarboxylation of 6-phosphogluconate to ribulose 5-phosphate and CO(2), with concomitant reduction of NADP to NADPH. This Lactococcus lactis subsp. cremoris (strain MG1363) protein is 6-phosphogluconate dehydrogenase, decarboxylating (gnd).